The chain runs to 321 residues: ATP-dependent 6-phosphofructokinase (321 aa).

Residue Gly-11 coordinates ATP. Position 21–25 (21–25 (RAVVR)) interacts with ADP. Residues 72–73 (RC) and 102–105 (GDGS) contribute to the ATP site. Asp-103 is a Mg(2+) binding site. 126 to 128 (TID) contacts substrate. Asp-128 acts as the Proton acceptor in catalysis. Residue Arg-155 coordinates ADP. Residues Arg-163 and 170 to 172 (MGR) contribute to the substrate site. Residues 186–188 (GAE), Arg-212, and 214–216 (KLH) contribute to the ADP site. Substrate contacts are provided by residues Glu-223, Arg-245, and 251–254 (HIQR).

This sequence belongs to the phosphofructokinase type A (PFKA) family. ATP-dependent PFK group I subfamily. Prokaryotic clade 'B1' sub-subfamily. Homotetramer. Requires Mg(2+) as cofactor.

It localises to the cytoplasm. The enzyme catalyses beta-D-fructose 6-phosphate + ATP = beta-D-fructose 1,6-bisphosphate + ADP + H(+). It functions in the pathway carbohydrate degradation; glycolysis; D-glyceraldehyde 3-phosphate and glycerone phosphate from D-glucose: step 3/4. Its activity is regulated as follows. Allosterically activated by ADP and other diphosphonucleosides, and allosterically inhibited by phosphoenolpyruvate. Catalyzes the phosphorylation of D-fructose 6-phosphate to fructose 1,6-bisphosphate by ATP, the first committing step of glycolysis. This chain is ATP-dependent 6-phosphofructokinase, found in Thermoanaerobacter pseudethanolicus (strain ATCC 33223 / 39E) (Clostridium thermohydrosulfuricum).